A 128-amino-acid chain; its full sequence is Lutropin subunit beta (128 aa).

6 cysteine pairs are disulfide-bonded: Cys-18/Cys-66, Cys-32/Cys-81, Cys-35/Cys-119, Cys-43/Cys-97, Cys-47/Cys-99, and Cys-102/Cys-109. Asn-22 is a glycosylation site (N-linked (GlcNAc...) asparagine).

The protein belongs to the glycoprotein hormones subunit beta family. Heterodimer of a common alpha chain and a unique beta chain which confers biological specificity to thyrotropin, lutropin, follitropin and gonadotropin.

It localises to the secreted. Promotes spermatogenesis and ovulation by stimulating the testes and ovaries to synthesize steroids. The protein is Lutropin subunit beta (LHB) of Struthio camelus (Common ostrich).